The chain runs to 183 residues: Archaemetzincin (183 aa).

Histidine 131 serves as a coordination point for Zn(2+). The Proton acceptor role is filled by glutamate 132. The Zn(2+) site is built by histidine 135, histidine 141, cysteine 142, cysteine 147, cysteine 166, and cysteine 169.

The protein belongs to the peptidase M54 family. As to quaternary structure, monomer. Zn(2+) is required as a cofactor.

In terms of biological role, probable zinc metalloprotease whose natural substrate is unknown. This chain is Archaemetzincin, found in Saccharolobus islandicus (strain L.S.2.15 / Lassen #1) (Sulfolobus islandicus).